The sequence spans 245 residues: 1-(5-phosphoribosyl)-5-[(5-phosphoribosylamino)methylideneamino] imidazole-4-carboxamide isomerase (245 aa).

The Proton acceptor role is filled by Asp-7. The Proton donor role is filled by Asp-129.

This sequence belongs to the HisA/HisF family.

The protein localises to the cytoplasm. It catalyses the reaction 1-(5-phospho-beta-D-ribosyl)-5-[(5-phospho-beta-D-ribosylamino)methylideneamino]imidazole-4-carboxamide = 5-[(5-phospho-1-deoxy-D-ribulos-1-ylimino)methylamino]-1-(5-phospho-beta-D-ribosyl)imidazole-4-carboxamide. The protein operates within amino-acid biosynthesis; L-histidine biosynthesis; L-histidine from 5-phospho-alpha-D-ribose 1-diphosphate: step 4/9. This Buchnera aphidicola subsp. Cinara cedri (strain Cc) protein is 1-(5-phosphoribosyl)-5-[(5-phosphoribosylamino)methylideneamino] imidazole-4-carboxamide isomerase.